The chain runs to 833 residues: Ribosome biogenesis protein BOP1 homolog (833 aa).

The segment at Asn20–Ser202 is disordered. Residues Ser36–Thr56 are compositionally biased toward low complexity. Acidic residues-rich tracts occupy residues Ser90–Glu111 and Glu136–Ser150. Residues Ser154 to Lys170 are compositionally biased toward low complexity. Residues Lys182–Tyr192 show a composition bias toward polar residues. Residues Asp193 to Ser202 show a composition bias toward acidic residues. WD repeat units follow at residues Thr331–Thr370, Gly488–Ser527, and Glu529–Glu569. Residues Thr568–Asn592 form a disordered region. Polar residues predominate over residues Pro582–Asn592. WD repeat units lie at residues His618–Pro660, Lys663–Lys701, Thr704–Lys743, Tyr747–Gln786, and Ile802–Asn833.

Belongs to the WD repeat BOP1/ERB1 family.

It localises to the nucleus. It is found in the nucleolus. The protein localises to the nucleoplasm. Its function is as follows. Required for maturation of ribosomal RNAs and formation of the large ribosomal subunit. In Dictyostelium discoideum (Social amoeba), this protein is Ribosome biogenesis protein BOP1 homolog.